The primary structure comprises 418 residues: Adenylosuccinate synthetase (418 aa).

GTP-binding positions include 12 to 18 (GDEGKGK) and 40 to 42 (GHT). Asp-13 (proton acceptor) is an active-site residue. Mg(2+) is bound by residues Asp-13 and Gly-40. Residues 13–16 (DEGK), 38–41 (NAGH), Thr-128, Arg-142, Gln-221, Thr-236, and Arg-299 each bind IMP. His-41 functions as the Proton donor in the catalytic mechanism. Residue 295-301 (ATTGRNR) coordinates substrate. GTP is bound by residues Arg-301, 327 to 329 (KAD), and 399 to 401 (SYG).

This sequence belongs to the adenylosuccinate synthetase family. As to quaternary structure, homodimer. The cofactor is Mg(2+).

It is found in the cytoplasm. It catalyses the reaction IMP + L-aspartate + GTP = N(6)-(1,2-dicarboxyethyl)-AMP + GDP + phosphate + 2 H(+). It participates in purine metabolism; AMP biosynthesis via de novo pathway; AMP from IMP: step 1/2. Its function is as follows. Plays an important role in the de novo pathway of purine nucleotide biosynthesis. Catalyzes the first committed step in the biosynthesis of AMP from IMP. In Finegoldia magna (strain ATCC 29328 / DSM 20472 / WAL 2508) (Peptostreptococcus magnus), this protein is Adenylosuccinate synthetase.